Consider the following 521-residue polypeptide: Bifunctional purine biosynthesis protein PurH (521 aa).

The MGS-like domain maps to M1–V147.

It belongs to the PurH family.

It catalyses the reaction (6R)-10-formyltetrahydrofolate + 5-amino-1-(5-phospho-beta-D-ribosyl)imidazole-4-carboxamide = 5-formamido-1-(5-phospho-D-ribosyl)imidazole-4-carboxamide + (6S)-5,6,7,8-tetrahydrofolate. The enzyme catalyses IMP + H2O = 5-formamido-1-(5-phospho-D-ribosyl)imidazole-4-carboxamide. Its pathway is purine metabolism; IMP biosynthesis via de novo pathway; 5-formamido-1-(5-phospho-D-ribosyl)imidazole-4-carboxamide from 5-amino-1-(5-phospho-D-ribosyl)imidazole-4-carboxamide (10-formyl THF route): step 1/1. It functions in the pathway purine metabolism; IMP biosynthesis via de novo pathway; IMP from 5-formamido-1-(5-phospho-D-ribosyl)imidazole-4-carboxamide: step 1/1. The chain is Bifunctional purine biosynthesis protein PurH from Geotalea uraniireducens (strain Rf4) (Geobacter uraniireducens).